The following is a 116-amino-acid chain: uncharacterized protein (116 aa).

A signal peptide spans Met1–Ala15.

This is an uncharacterized protein from Haemophilus influenzae (strain ATCC 51907 / DSM 11121 / KW20 / Rd).